The chain runs to 562 residues: Arginine--tRNA ligase (562 aa).

A 'HIGH' region motif is present at residues 129–139 (ANPTGPLHVGH).

The protein belongs to the class-I aminoacyl-tRNA synthetase family. In terms of assembly, monomer.

Its subcellular location is the cytoplasm. The catalysed reaction is tRNA(Arg) + L-arginine + ATP = L-arginyl-tRNA(Arg) + AMP + diphosphate. The chain is Arginine--tRNA ligase from Xylella fastidiosa (strain M12).